Here is a 254-residue protein sequence, read N- to C-terminus: 2,3-bisphosphoglycerate-dependent phosphoglycerate mutase (254 aa).

Substrate-binding positions include 15 to 22 (RHGQSEWN), 28 to 29 (TG), Arg-67, 94 to 97 (ERHY), Lys-105, 121 to 122 (RR), and 188 to 189 (GN). Catalysis depends on His-16, which acts as the Tele-phosphohistidine intermediate. Glu-94 (proton donor/acceptor) is an active-site residue.

This sequence belongs to the phosphoglycerate mutase family. BPG-dependent PGAM subfamily.

It catalyses the reaction (2R)-2-phosphoglycerate = (2R)-3-phosphoglycerate. The protein operates within carbohydrate degradation; glycolysis; pyruvate from D-glyceraldehyde 3-phosphate: step 3/5. In terms of biological role, catalyzes the interconversion of 2-phosphoglycerate and 3-phosphoglycerate. This is 2,3-bisphosphoglycerate-dependent phosphoglycerate mutase from Corynebacterium jeikeium (strain K411).